We begin with the raw amino-acid sequence, 71 residues long: MLDKKVLEILVCPLTGGKLSYDTERAELISHEAGLAYPVRDGIPIMLVDEARKLQPEEPKEGSELQSSDNQ.

Basic and acidic residues predominate over residues 52-63 (RKLQPEEPKEGS). Residues 52 to 71 (RKLQPEEPKEGSELQSSDNQ) are disordered.

The protein belongs to the UPF0434 family.

The protein is UPF0434 protein APH_0052 of Anaplasma phagocytophilum (strain HZ).